A 163-amino-acid chain; its full sequence is MGYQKVVLVAACNILNENISKNDNVLNQNNNINNINNNNYNSNDDNEKIIGNNNISTNNSNLILFNQNNNNNNNCHEERLECQVPFEYIDVYGNADFSFLKYTKRSEFRKYLKKAYNIESLFDKSFRFNSITSFPTIKYYYSLIEDDENIKKKIKEDSYLLLV.

This is an uncharacterized protein from Dictyostelium discoideum (Social amoeba).